Reading from the N-terminus, the 122-residue chain is Large ribosomal subunit protein bL12 (122 aa).

This sequence belongs to the bacterial ribosomal protein bL12 family. As to quaternary structure, homodimer. Part of the ribosomal stalk of the 50S ribosomal subunit. Forms a multimeric L10(L12)X complex, where L10 forms an elongated spine to which 2 to 4 L12 dimers bind in a sequential fashion. Binds GTP-bound translation factors.

In terms of biological role, forms part of the ribosomal stalk which helps the ribosome interact with GTP-bound translation factors. Is thus essential for accurate translation. The chain is Large ribosomal subunit protein bL12 from Blochmanniella pennsylvanica (strain BPEN).